Reading from the N-terminus, the 346-residue chain is Trans-enoyl reductase FFUJ_12240 (346 aa).

NADP(+) is bound at residue His40–Lys43. Leu124–Leu131 serves as a coordination point for substrate. NADP(+)-binding positions include Ala157–Thr160, Ser180–Asn183, Tyr198, and Leu245–Glu246. Residue Ala266–Leu270 participates in substrate binding. Val335–His336 contributes to the NADP(+) binding site.

The protein belongs to the zinc-containing alcohol dehydrogenase family.

In terms of biological role, trans-enoyl reductase; part of the gene cluster that mediates the biosynthesis of fujikurins A-D, secondary metabolites playing a role during rice infection. The polyketide synthase PKS19 acts with the trans-enoyl reductase FFUJ_12240 and the polyketide transferase FFUJ_12241 to produce fujikurins, however, the biosynthesis pathway has not been identified yet. The protein is Trans-enoyl reductase FFUJ_12240 of Gibberella fujikuroi (strain CBS 195.34 / IMI 58289 / NRRL A-6831) (Bakanae and foot rot disease fungus).